Here is a 171-residue protein sequence, read N- to C-terminus: 6,7-dimethyl-8-ribityllumazine synthase (171 aa).

Residues phenylalanine 24, 58–60 (ALE), and 82–84 (AVI) contribute to the 5-amino-6-(D-ribitylamino)uracil site. 87–88 (ET) serves as a coordination point for (2S)-2-hydroxy-3-oxobutyl phosphate. The active-site Proton donor is histidine 90. Asparagine 115 contributes to the 5-amino-6-(D-ribitylamino)uracil binding site. Arginine 129 is a (2S)-2-hydroxy-3-oxobutyl phosphate binding site. A disordered region spans residues 150-171 (ALDQLGDDEDEEEDEEDEEERA). Positions 154–171 (LGDDEDEEEDEEDEEERA) are enriched in acidic residues.

This sequence belongs to the DMRL synthase family.

The enzyme catalyses (2S)-2-hydroxy-3-oxobutyl phosphate + 5-amino-6-(D-ribitylamino)uracil = 6,7-dimethyl-8-(1-D-ribityl)lumazine + phosphate + 2 H2O + H(+). Its pathway is cofactor biosynthesis; riboflavin biosynthesis; riboflavin from 2-hydroxy-3-oxobutyl phosphate and 5-amino-6-(D-ribitylamino)uracil: step 1/2. In terms of biological role, catalyzes the formation of 6,7-dimethyl-8-ribityllumazine by condensation of 5-amino-6-(D-ribitylamino)uracil with 3,4-dihydroxy-2-butanone 4-phosphate. This is the penultimate step in the biosynthesis of riboflavin. The chain is 6,7-dimethyl-8-ribityllumazine synthase from Burkholderia ambifaria (strain ATCC BAA-244 / DSM 16087 / CCUG 44356 / LMG 19182 / AMMD) (Burkholderia cepacia (strain AMMD)).